The sequence spans 295 residues: 4-diphosphocytidyl-2-C-methyl-D-erythritol kinase (295 aa).

Residue Lys15 is part of the active site. 102–112 contacts ATP; that stretch reads PIASGVGGGSS. Asp144 is a catalytic residue.

Belongs to the GHMP kinase family. IspE subfamily.

The catalysed reaction is 4-CDP-2-C-methyl-D-erythritol + ATP = 4-CDP-2-C-methyl-D-erythritol 2-phosphate + ADP + H(+). The protein operates within isoprenoid biosynthesis; isopentenyl diphosphate biosynthesis via DXP pathway; isopentenyl diphosphate from 1-deoxy-D-xylulose 5-phosphate: step 3/6. Functionally, catalyzes the phosphorylation of the position 2 hydroxy group of 4-diphosphocytidyl-2C-methyl-D-erythritol. The chain is 4-diphosphocytidyl-2-C-methyl-D-erythritol kinase from Mesorhizobium japonicum (strain LMG 29417 / CECT 9101 / MAFF 303099) (Mesorhizobium loti (strain MAFF 303099)).